The sequence spans 78 residues: Acyl carrier protein BQ2027_MB0103 (78 aa).

The region spanning 1–78 is the Carrier domain; that stretch reads MRDRILAAVC…ELEAVCTEFG (78 aa). Serine 35 is subject to O-(pantetheine 4'-phosphoryl)serine.

This sequence belongs to the acyl carrier protein (ACP) family. The cofactor is pantetheine 4'-phosphate.

It functions in the pathway lipid metabolism; fatty acid metabolism. Acyl-carrier protein (ACP) involved in the biosynthesis of a unique class of isonitrile lipopeptides (INLPs) that seem to play a role in metal acquisition. Is the dedicated ACP for the loading of activated acyl groups catalyzed by FadD10. This is Acyl carrier protein BQ2027_MB0103 from Mycobacterium bovis (strain ATCC BAA-935 / AF2122/97).